Consider the following 373-residue polypeptide: MGTLTDPTVDPADPHVKADDGAGLIDAGQVHPERLETLAEDQSQRDGANGVHFPVKTNTGNAAESTASTENGETGSIDVGKLRTKPSPVQTHIHRGGSEGLYRGASGGIYRSASGSTHIHRGASGGILRGQSGGIHRGRSGAIHLPSLQSISFSMTRLPEEDAGVMMHFTETKETETTPESSRASDEDAPTPKKKHRLRKHLTAIGAYSFAFRFSETVLSLIAIVVMCSTRGSMRTDGVDFGTLKFNHFQAYRYLVAVNVIVFVYSTFQFIQLLYTVILGISFIPSIFISTWMTFGFDQLFLYLLLSASTSAATVANMSYTGEMGIQLCSRFDVGSFCSKADVAVTMSFFAVLAMLSSTILAIYRIAVLLREY.

2 disordered regions span residues Met-1–Gly-100 and Thr-172–Lys-195. Topologically, residues Met-1–Ala-204 are cytoplasmic. Over residues Lys-56–Thr-74 the composition is skewed to polar residues. The helical transmembrane segment at Ile-205–Val-225 threads the bilayer. The Extracellular portion of the chain corresponds to Val-226 to Arg-253. A helical transmembrane segment spans residues Tyr-254–Leu-274. At Tyr-275 to Thr-276 the chain is on the cytoplasmic side. The chain crosses the membrane as a helical span at residues Val-277–Phe-297. The Extracellular portion of the chain corresponds to Asp-298–Asp-342. Residue Asn-317 is glycosylated (N-linked (GlcNAc...) asparagine). Residues Val-343 to Ile-363 traverse the membrane as a helical segment. The Cytoplasmic segment spans residues Tyr-364 to Tyr-373.

Belongs to the Casparian strip membrane proteins (CASP) family. As to quaternary structure, homodimer and heterodimers.

It localises to the cell membrane. The polypeptide is CASP-like protein UU6 (Physcomitrium patens (Spreading-leaved earth moss)).